The chain runs to 90 residues: MNKTELINAVAETSGLSKKDATKAVDAVFDSITEALRKGDKVQLIGFGNFEVRERAARKGRNPQTGEEMEIPASKVPAFKPGKALKDAVK.

Phosphothreonine is present on threonine 4. Residues alanine 56 to lysine 90 form a disordered region.

Belongs to the bacterial histone-like protein family. As to quaternary structure, homodimer.

In terms of biological role, histone-like DNA-binding protein which is capable of wrapping DNA to stabilize it, and thus to prevent its denaturation under extreme environmental conditions. The protein is DNA-binding protein HU (hup) of Geobacillus stearothermophilus (Bacillus stearothermophilus).